Here is a 254-residue protein sequence, read N- to C-terminus: Attacin-A (254 aa).

The signal sequence occupies residues 1 to 18; the sequence is MFTYKLILGLVLVVSASA. The propeptide occupies 19-62; that stretch reads RYLVFEDLEGESYLVPNQAEDEQVLEGEPFYENAVQLASPRVRR.

This sequence belongs to the attacin/sarcotoxin-2 family.

Its subcellular location is the secreted. Its function is as follows. Hemolymph antibacterial protein. The polypeptide is Attacin-A (Trichoplusia ni (Cabbage looper)).